The chain runs to 159 residues: Probable acetolactate synthase small subunit (159 aa).

An ACT domain is found at 4–78; the sequence is TIAVLVENKP…ETIKVSEITE (75 aa).

It belongs to the acetolactate synthase small subunit family. Dimer of large and small chains.

The catalysed reaction is 2 pyruvate + H(+) = (2S)-2-acetolactate + CO2. It functions in the pathway amino-acid biosynthesis; L-isoleucine biosynthesis; L-isoleucine from 2-oxobutanoate: step 1/4. The protein operates within amino-acid biosynthesis; L-valine biosynthesis; L-valine from pyruvate: step 1/4. The sequence is that of Probable acetolactate synthase small subunit (ilvH) from Archaeoglobus fulgidus (strain ATCC 49558 / DSM 4304 / JCM 9628 / NBRC 100126 / VC-16).